We begin with the raw amino-acid sequence, 917 residues long: Protein Ami (917 aa).

Residues 1–30 (MKKLVKSAVVFAGLVFIGTSATMITEKASA) form the signal peptide. The 128-residue stretch at 118-245 (KPEGIVIHET…YLGGTTHTDP (128 aa)) folds into the N-acetylmuramoyl-L-alanine amidase domain. A GW repeat region, necessary and sufficient for cell surface attachment region spans residues 262–917 (LINEKYKAMQ…KAANLSAKKQ (656 aa)). GW domains lie at 279–358 (YDKA…TFYT), 361–435 (MEKT…TTKY), 440–519 (YDKA…TFYT), 522–596 (MEKN…ATQY), 601–679 (YDKA…TFYT), 682–756 (MEKT…TTKY), 761–840 (YDKA…TFYT), and 843–917 (MEKN…AKKQ).

It in the N-terminal section; belongs to the N-acetylmuramoyl-L-alanine amidase 2 family.

The protein resides in the cell surface. It localises to the cell membrane. Its function is as follows. A bacteriolysin able to lyse both L.monocytogenes and S.aureus. In Listeria monocytogenes serotype 1/2a (strain EGD / Mackaness), this protein is Protein Ami.